The chain runs to 483 residues: Regulatory protein ViaA (483 aa).

The protein belongs to the ViaA family. In terms of assembly, homodimer. Interacts with RavA.

The protein localises to the cytoplasm. In terms of biological role, component of the RavA-ViaA chaperone complex, which may act on the membrane to optimize the function of some of the respiratory chains. ViaA stimulates the ATPase activity of RavA. The chain is Regulatory protein ViaA from Escherichia fergusonii (strain ATCC 35469 / DSM 13698 / CCUG 18766 / IAM 14443 / JCM 21226 / LMG 7866 / NBRC 102419 / NCTC 12128 / CDC 0568-73).